The primary structure comprises 439 residues: 3beta-hydroxysteroid-dehydrogenase/decarboxylase isoform 1 (439 aa).

16–21 (GGRGFA) serves as a coordination point for NAD(+). Asn75 and Asn158 each carry an N-linked (GlcNAc...) asparagine glycan. NAD(+)-binding residues include Tyr161 and Lys165. The active-site Proton donor is the Lys165. Asn327 is a glycosylation site (N-linked (GlcNAc...) asparagine). The Reticulon; atypical domain maps to 371–439 (VTETIQWKKQ…MKVFGSKKID (69 aa)). 2 helical membrane passes run 381–401 (TLIA…TTGS) and 405–425 (IITA…INGI).

It belongs to the 3-beta-HSD family.

The protein resides in the endoplasmic reticulum membrane. The enzyme catalyses a 3beta-hydroxysteroid-4alpha-carboxylate + NAD(+) = a 3-oxosteroid + CO2 + NADH. The catalysed reaction is 4alpha-carboxy-4beta,14alpha-dimethyl-9beta,19-cyclo-5alpha-ergost-24(24(1))-en-3beta-ol + NAD(+) = cycloeucalenone + CO2 + NADH. It participates in steroid biosynthesis; zymosterol biosynthesis; zymosterol from lanosterol: step 4/6. Functionally, 3beta-hydroxysteroid-dehydrogenase/decarboxylase involved in sterol synthesis. Catalyzes the formation of 3-oxosteroids from 3beta-hydroxysteroids-4alpha-carboxylate. Involved in the regulation of inflorescence internodes and leaves growth, probably by affecting auxin transporter activity possibly by altering sterol composition in the membranes. This Arabidopsis thaliana (Mouse-ear cress) protein is 3beta-hydroxysteroid-dehydrogenase/decarboxylase isoform 1.